The sequence spans 79 residues: Defensin-like protein 54 (79 aa).

The N-terminal stretch at 1 to 27 is a signal peptide; the sequence is MGIKKTSATVFLVIILTISFSYYDVEA. Cystine bridges form between C39–C76, C43–C67, C52–C74, and C56–C75.

It belongs to the DEFL family.

The protein resides in the secreted. This Arabidopsis thaliana (Mouse-ear cress) protein is Defensin-like protein 54.